The following is a 348-amino-acid chain: Photosystem II protein D1 (348 aa).

Helical transmembrane passes span 33–50 (YIGW…LATV), 122–137 (HFIL…EWEF), and 146–160 (WIFV…AASA). Chlorophyll a is bound at residue His122. Tyr130 lines the pheophytin a pocket. Asp174 and Glu193 together coordinate [CaMn4O5] cluster. Residues 201 to 222 (FHILGVAAVFGGSLFSAMHGSL) traverse the membrane as a helical segment. His202 contacts chlorophyll a. A quinone-binding positions include His219 and 268 to 269 (SF). His219 contributes to the Fe cation binding site. His276 provides a ligand contact to Fe cation. A helical transmembrane segment spans residues 278–292 (FLAAWPVIGIWFTAL). The [CaMn4O5] cluster site is built by His336, Glu337, Asp346, and Ala348.

It belongs to the reaction center PufL/M/PsbA/D family. PSII is composed of 1 copy each of membrane proteins PsbA, PsbB, PsbC, PsbD, PsbE, PsbF, PsbH, PsbI, PsbJ, PsbK, PsbL, PsbM, PsbT, PsbX, PsbY, PsbZ, Psb30/Ycf12, at least 3 peripheral proteins of the oxygen-evolving complex and a large number of cofactors. It forms dimeric complexes. Requires The D1/D2 heterodimer binds P680, chlorophylls that are the primary electron donor of PSII, and subsequent electron acceptors. It shares a non-heme iron and each subunit binds pheophytin, quinone, additional chlorophylls, carotenoids and lipids. D1 provides most of the ligands for the Mn4-Ca-O5 cluster of the oxygen-evolving complex (OEC). There is also a Cl(-1) ion associated with D1 and D2, which is required for oxygen evolution. The PSII complex binds additional chlorophylls, carotenoids and specific lipids. as cofactor. Tyr-165 forms a radical intermediate that is referred to as redox-active TyrZ, YZ or Y-Z.

It is found in the plastid. The protein resides in the chloroplast thylakoid membrane. It catalyses the reaction 2 a plastoquinone + 4 hnu + 2 H2O = 2 a plastoquinol + O2. Photosystem II (PSII) is a light-driven water:plastoquinone oxidoreductase that uses light energy to abstract electrons from H(2)O, generating O(2) and a proton gradient subsequently used for ATP formation. It consists of a core antenna complex that captures photons, and an electron transfer chain that converts photonic excitation into a charge separation. The D1/D2 (PsbA/PsbD) reaction center heterodimer binds P680, the primary electron donor of PSII as well as several subsequent electron acceptors. The polypeptide is Photosystem II protein D1 (Heterocapsa pygmaea (Dinoflagellate)).